We begin with the raw amino-acid sequence, 271 residues long: 5-deoxy-glucuronate isomerase (271 aa).

This sequence belongs to the isomerase IolB family.

The enzyme catalyses 5-deoxy-D-glucuronate = 5-dehydro-2-deoxy-D-gluconate. It participates in polyol metabolism; myo-inositol degradation into acetyl-CoA; acetyl-CoA from myo-inositol: step 4/7. Its function is as follows. Involved in the isomerization of 5-deoxy-glucuronate (5DG) to 5-dehydro-2-deoxy-D-gluconate (DKG or 2-deoxy-5-keto-D-gluconate). The chain is 5-deoxy-glucuronate isomerase from Bacillus licheniformis (strain ATCC 14580 / DSM 13 / JCM 2505 / CCUG 7422 / NBRC 12200 / NCIMB 9375 / NCTC 10341 / NRRL NRS-1264 / Gibson 46).